A 156-amino-acid chain; its full sequence is Endoribonuclease YbeY (156 aa).

Residues His-105, His-109, and Asp-115 each coordinate Zn(2+).

The protein belongs to the endoribonuclease YbeY family. The cofactor is Zn(2+).

It is found in the cytoplasm. Its function is as follows. Single strand-specific metallo-endoribonuclease involved in late-stage 70S ribosome quality control and in maturation of the 3' terminus of the 16S rRNA. This chain is Endoribonuclease YbeY, found in Chlorobium chlorochromatii (strain CaD3).